Consider the following 274-residue polypeptide: Elongation factor Ts (274 aa).

Residues 79-82 (TDFV) are involved in Mg(2+) ion dislocation from EF-Tu.

The protein belongs to the EF-Ts family.

The protein localises to the cytoplasm. Its function is as follows. Associates with the EF-Tu.GDP complex and induces the exchange of GDP to GTP. It remains bound to the aminoacyl-tRNA.EF-Tu.GTP complex up to the GTP hydrolysis stage on the ribosome. The chain is Elongation factor Ts from Azobacteroides pseudotrichonymphae genomovar. CFP2.